Here is a 344-residue protein sequence, read N- to C-terminus: uncharacterized protein (344 aa).

A run of 5 helical transmembrane segments spans residues 53–73 (FVVG…VSVW), 84–104 (WPIL…GYNI), 153–173 (IYPL…LYLL), 189–209 (FGAW…LEML), and 275–295 (IASE…VGVF).

This sequence belongs to the steroid 5-alpha reductase family.

It localises to the endoplasmic reticulum membrane. This is an uncharacterized protein from Schizosaccharomyces pombe (strain 972 / ATCC 24843) (Fission yeast).